The primary structure comprises 405 residues: Amino acid transporter AVT1I (405 aa).

11 helical membrane passes run 22–42 (CFNA…YSLA), 46–66 (WLSL…SLLI), 93–113 (IIVS…FLIL), 140–160 (FMAT…LSVL), 169–189 (LATT…GIGF), 201–221 (IPTA…LPTL), 234–254 (VLLI…VLGY), 278–298 (VAIY…ITPT), 318–338 (LLIS…LPFF), 343–363 (SLVG…LCYL), and 377–397 (IMLF…TYIA).

It belongs to the amino acid/polyamine transporter 2 family. Amino acid/auxin permease (AAAP) (TC 2.A.18.5) subfamily.

Its subcellular location is the membrane. This is Amino acid transporter AVT1I from Arabidopsis thaliana (Mouse-ear cress).